The primary structure comprises 337 residues: DNA-directed RNA polymerase subunit alpha (337 aa).

The alpha N-terminal domain (alpha-NTD) stretch occupies residues M1 to E233. The alpha C-terminal domain (alpha-CTD) stretch occupies residues K265–F337.

Belongs to the RNA polymerase alpha chain family. In terms of assembly, in plastids the minimal PEP RNA polymerase catalytic core is composed of four subunits: alpha, beta, beta', and beta''. When a (nuclear-encoded) sigma factor is associated with the core the holoenzyme is formed, which can initiate transcription.

It localises to the plastid. The protein localises to the chloroplast. The enzyme catalyses RNA(n) + a ribonucleoside 5'-triphosphate = RNA(n+1) + diphosphate. Its function is as follows. DNA-dependent RNA polymerase catalyzes the transcription of DNA into RNA using the four ribonucleoside triphosphates as substrates. The sequence is that of DNA-directed RNA polymerase subunit alpha from Solanum lycopersicum (Tomato).